A 461-amino-acid chain; its full sequence is MSARDNEKGSARSQPSHAAASEIENVPRPSRQQSWTGTMIKVFIICACAGIVSKYIIPLDSIFKSVHIDPHDYATRANRILSTTPLIDGHNDLPYLIRLETKNKIYDHEKLPFRTGLLSHTDQIKIQEGKLGGQFWSVFVECATDPNAEIDDPTWAVRDTLEQIDVTKRLVQEYPDLLEYCESASCAKAAFKRGKVGSFLGIEGGHQIGNSLASLRQVYDLGVRYITVTHNCDNAFATAASTVAVGKPDLGLTDFGREFVKEMNRLGMLVDLSHVSHQTMRDILSVTKAPVMFSHSSSYALSKHLRNVPDDVLNGVTKNGGVVMVTFVPSFLKVDDPASATIHDAVDHILHVAKVAGWDHVGIGSDFDGTADVPEGLENVSKYPRLIELLLERGVTDEQARKLIGENILRVWSNVEEIAENIRALGEKPNEETWSGRKWTAAIDIPMPFMFKDSADKRKEL.

Over residues 1-10 the composition is skewed to basic and acidic residues; it reads MSARDNEKGS. Residues 1–31 are disordered; sequence MSARDNEKGSARSQPSHAAASEIENVPRPSR. A helical membrane pass occupies residues 35–52; sequence WTGTMIKVFIICACAGIV. Positions 90, 92, and 203 each coordinate Zn(2+). The cysteines at positions 142 and 232 are disulfide-linked. H230 lines the substrate pocket. Zn(2+) is bound by residues H274 and H295. Substrate-binding residues include R306 and D366. N379 carries N-linked (GlcNAc...) asparagine glycosylation.

It belongs to the metallo-dependent hydrolases superfamily. Peptidase M19 family. Zn(2+) is required as a cofactor.

Its subcellular location is the membrane. The enzyme catalyses an L-aminoacyl-L-amino acid + H2O = 2 an L-alpha-amino acid. Its function is as follows. Hydrolyzes a wide range of dipeptides. This is Putative dipeptidase CPSG_01350 from Coccidioides posadasii (strain RMSCC 757 / Silveira) (Valley fever fungus).